The chain runs to 387 residues: 8-amino-7-oxononanoate synthase (387 aa).

Residue 109 to 110 (GY) participates in pyridoxal 5'-phosphate binding. A substrate-binding site is contributed by His134. The pyridoxal 5'-phosphate site is built by Ser182, His214, and Thr242. Residue Lys245 is modified to N6-(pyridoxal phosphate)lysine. Residue Thr359 participates in substrate binding.

The protein belongs to the class-II pyridoxal-phosphate-dependent aminotransferase family. BioF subfamily. In terms of assembly, homodimer. Pyridoxal 5'-phosphate is required as a cofactor.

It carries out the reaction 6-carboxyhexanoyl-[ACP] + L-alanine + H(+) = (8S)-8-amino-7-oxononanoate + holo-[ACP] + CO2. Its pathway is cofactor biosynthesis; biotin biosynthesis. Its function is as follows. Catalyzes the decarboxylative condensation of pimeloyl-[acyl-carrier protein] and L-alanine to produce 8-amino-7-oxononanoate (AON), [acyl-carrier protein], and carbon dioxide. The polypeptide is 8-amino-7-oxononanoate synthase (Haemophilus ducreyi (strain 35000HP / ATCC 700724)).